We begin with the raw amino-acid sequence, 414 residues long: STAGA complex 65 subunit gamma (414 aa).

The interval 87–108 is disordered; the sequence is NQQQTEGVKTEESEPLPSCPGS. Phosphoserine is present on Ser108. Lys271 is covalently cross-linked (Glycyl lysine isopeptide (Lys-Gly) (interchain with G-Cter in SUMO2)). Ser323 and Ser334 each carry phosphoserine. Residues 346 to 414 are disordered; that stretch reads PQESEEGNVS…QRCKKRMRKI (69 aa). A compositionally biased stretch (low complexity) spans 386-395; it reads SSYGSHSTDS.

Component of the STAGA transcription coactivator-HAT complex, at least composed of SUPT3H, SUPT7L, GCN5L2, TAF5L, TAF6L, TADA3L, TAD1L, TAF10, TAF12 and TAF9. Post-translationally, sumoylated. Expressed at high levels in adenocarcinomas and gliomas and low in esophageal cancers and malignant hematological disease. Also expressed at high level in the thymus, low in peripheral blood mononuclear cells, and lowest in the stomach, small intestine, and skeletal muscle.

Its subcellular location is the nucleus. This chain is STAGA complex 65 subunit gamma (SUPT7L), found in Homo sapiens (Human).